The primary structure comprises 105 residues: Guanidinium exporter (105 aa).

The helical transmembrane segment at 1-21 (MSWIILVIAGLLEVVWAVGLK) threads the bilayer. The Cytoplasmic segment spans residues 22–28 (YTHGFSR). The helical transmembrane segment at 29–49 (LTPSVITVTAMIVSMALLAWA) threads the bilayer. The Periplasmic portion of the chain corresponds to 50–57 (MKSLPVGT). A helical membrane pass occupies residues 58–78 (AYAVWTGIGAVGAAITGIVLL). Residues 79–81 (GES) are Cytoplasmic-facing. The chain crosses the membrane as a helical span at residues 82-102 (ANPMRLASLALIVLGIIGLKL). At 103 to 105 (STH) the chain is on the periplasmic side.

It belongs to the drug/metabolite transporter (DMT) superfamily. Small multidrug resistance (SMR) (TC 2.A.7.1) family. Gdx/SugE subfamily.

Its subcellular location is the cell inner membrane. Guanidinium ion exporter. Couples guanidinium export to the proton motive force, exchanging one guanidinium ion for two protons. The polypeptide is Guanidinium exporter (Escherichia coli O157:H7).